Consider the following 854-residue polypeptide: Transcription factor asR3 (854 aa).

The zn(2)-C6 fungal-type DNA-binding region spans 19 to 45 (CWECRRRKIKCDRNDPCAHCIRHETQC). Residues 56-156 (TDSDVSRTRP…SLSTNTSPSA (101 aa)) are disordered. Polar residues-rich tracts occupy residues 78–90 (ASGS…TRPS) and 125–145 (LNPS…SSRG). A compositionally biased stretch (low complexity) spans 146–156 (PSLSTNTSPSA).

Its subcellular location is the nucleus. Its function is as follows. Transcription factor; part of the gene cluster that mediates the biosynthesis of xenovulene A, an unusual meroterpenoid that has potent inhibitory effects on the human gamma-aminobutyrate A (GABAA) benzodiazepine receptor. The polypeptide is Transcription factor asR3 (Sarocladium schorii (Acremonium strictum (strain IMI 501407))).